The chain runs to 129 residues: Sigma factor-binding protein Crl (129 aa).

Residues 99-119 are essential for activity; the sequence is TQNCFHLKLVKTLEENFQLSV.

This sequence belongs to the Crl family.

It localises to the cytoplasm. Its function is as follows. Binds to the sigma-S subunit of RNA polymerase, activating expression of sigma-S-regulated genes. Stimulates RNA polymerase holoenzyme formation and may bind to several other sigma factors, such as sigma-70 and sigma-32. In Vibrio vulnificus (strain CMCP6), this protein is Sigma factor-binding protein Crl.